The sequence spans 567 residues: PHD finger protein 1 (567 aa).

A disordered region spans residues 1–31 (MAQPPRLSRSGASSLWDPASPAPTSGPRPRL). The Tudor domain occupies 29–86 (PRLWEGQDVLARWTDGLLYLGTIKKVDSAREVCLVQFEDDSQFLVLWKDISPAALPGE). 2 PHD-type zinc fingers span residues 87–142 (ELLC…CVFA) and 186–240 (QSYC…CRGG). 2 disordered regions span residues 333 to 441 (ARMP…TDAR) and 455 to 537 (HPSA…GYLS). Position 360 is a phosphoserine (Gly360). The span at 371–386 (PEPEPLRRRQKGKVEE) shows a compositional bias: basic and acidic residues. Ser420 bears the Phosphoserine mark. 3 stretches are compositionally biased toward low complexity: residues 423–433 (PNQSYQGSSGY), 456–470 (PSASTAGTSGDSGPP), and 488–510 (SAPHSMTASSSSVSSPSPGLPRR). Residues 524–534 (GTGGGVRGGVG) show a composition bias toward gly residues.

Belongs to the Polycomblike family. As to quaternary structure, interacts with CHMP1. Associated component of the PRC2 complex. Interacts with p53/TP53. As to expression, highest levels in heart, skeletal muscle, and pancreas, lower levels in brain, placenta, lung, liver and kidney.

The protein resides in the nucleus. It localises to the cytoplasm. Its subcellular location is the cytoskeleton. The protein localises to the microtubule organizing center. It is found in the centrosome. Its function is as follows. Polycomb group (PcG) that specifically binds histone H3 trimethylated at 'Lys-36' (H3K36me3) and recruits the PRC2 complex. Involved in DNA damage response and is recruited at double-strand breaks (DSBs). Acts by binding to H3K36me3, a mark for transcriptional activation, and recruiting the PRC2 complex: it is however unclear whether recruitment of the PRC2 complex to H3K36me3 leads to enhance or inhibit H3K27me3 methylation mediated by the PRC2 complex. According to some reports, PRC2 recruitment by PHF1 promotes H3K27me3 and subsequent gene silencing by inducing spreading of PRC2 and H3K27me3 into H3K36me3 loci. According to another report, PHF1 recruits the PRC2 complex at double-strand breaks (DSBs) and inhibits the activity of PRC2. Regulates p53/TP53 stability and prolonges its turnover: may act by specifically binding to a methylated from of p53/TP53. This is PHD finger protein 1 (PHF1) from Homo sapiens (Human).